The primary structure comprises 1809 residues: MALSLQPQLLLLLSLLPQEVTSAPTGPQSLDAGLSLLKSFVATLDQAPQRSLSQSRFSAFLANISSSFQLGRMGEGPVGEPPPLQPPALRLHDFLVTLRGSPDWEPMLGLLGDVLALLGQEQTPRDFLVHQAGVLGGLVEALLGALVPGGPPAPTRPPCTRDGPSDCVLAADWLPSLMLLLEGTRWQALVQLQPSVDPTNATGLDGREPAPHFLQGLLGLLTPAGELGSEEALWGGLLRTVGAPLYAAFQEGLLRVTHSLQDEVFSIMGQPEPDASGQCQGGNLQQLLLWGMRNNLSWDARALGFLSGSPPPPPALLHCLSRGVPLPRASQPAAHISPRQRRAISVEALCENHSGPEPPYSISNFSIYLLCQHIKPATPRPPPTTPRPPPTTPQPPPTTTQPIPDTTQPPPVTPRPPPTTPQPPPSTAVICQTAVWYAVSWAPGARGWLQACHDQFPDQFLDMICGNLSFSALSGPSRPLVKQLCAGLLPPPTSCPPGLIPVPLTPEIFWGCFLENETLWAERLCVEDSLQAVPPRNQAWVQHVCRGPTLDATDFPPCRVGPCGERCPDGGSFLLMVCANDTLYEALVPFWAWLAGQCRISRGGNDTCFLEGMLGPLLPSLPPLGPSPLCLAPGPFLLGMLSQLPRCQSSVPALAHPTRLHYLLRLLTFLLGPGTGGAETQGMLGQALLLSSLPDNCSFWDAFRPEGRRSVLRTVGEYLQREEPTPPGLDSSLSLGSGMSKMELLSCFSPVLWDLLQREKSVWALRTLVKAYLRMPPEDLQQLVLSAEMEAAQGFLTLMLRSWAKLKVQPSEEQAMGRLTALLLQRYPRLTSQLFIDMSPLIPFLAVPDLMRFPPSLLANDSVLAAIRDHSSGMKPEQKEALAKRLLAPELFGEVPDWPQELLWAALPLLPHLPLESFLQLSPHQIQALEDSWPVADLGPGHARHVLRSLVNQSMEDGEEQVLRLGSLACFLSPEELQSLVPLSDPMGPVEQGLLECAANGTLSPEGRVAYELLGVLRSSGGTVLSPRELRVWAPLFPQLGLRFLQELSETQLRAMLPALQGASVTPAQAVLLFGRLLPKHDLSLEELCSLHPLLPGLSPQTLQAIPKRVLVGACSCLGPELSRLSACQIAALLQTFRVKDGVKNMGAAGAGSAVCIPGQPTTWPDCLLPLLPLKLLQLDAAALLANRRLYRQLPWSEQQAQFLWKKMQVPTNLSLRNLQALGNLAGGMTCEFLQQISSMVDFLDVVHMLYQLPTGVRESLRACIWTELQRRMTMPEPELTTLGPELSELDTKLLLDLPIQLMDRLSNDSIMLVVEMVQGAPEQLLALTPLHQTALAERALKNLAPKETPISKEVLETLGPLVGFLGIESTRRIPLPILLSHLSQLQGFCLGETFATELGWLLLQEPVLGKPELWSQDEIEQAGRLVFTLSAEAISSIPREALGPETLERLLGKHQSWEQSRVGHLCGESQLAHKKAALVAGIVHPAAEGLQEPVPNCADIRGTFPAAWSATQISEMELSDFEDCLSLFAGDPGLGPEELRAAMGKAKQLWGPPRGFRPEQILQLGRLLIGLGERELQELTLVDWGVLSSLGQIDGWSSMQLRAVVSSFLRQSGRHVSHLDFIYLTALGYTVCGLRPEELQHISSWEFSQAALFLGSLHLPCSEEQLEVLAYLLVLPGGFGPVSNWGPEIFTEIGTIAAGIPDLALSALLRGQIQGLTPLAISVIPAPKFAVVFNPIQLSSLTRGQAVAVTPEQLAYLSPEQRRAVAWAQHEGKEIPEQLGRNSAWGLYDWFQASWALALPVSIFGHLL.

The signal sequence occupies residues 1–22; sequence MALSLQPQLLLLLSLLPQEVTS. N-linked (GlcNAc...) asparagine glycosylation is found at Asn63, Asn200, Asn295, Asn352, and Asn364. The segment at 376–426 is disordered; sequence PATPRPPPTTPRPPPTTPQPPPTTTQPIPDTTQPPPVTPRPPPTTPQPPPS. 2 stretches are compositionally biased toward pro residues: residues 378–399 and 407–426; these read TPRP…PPTT and TQPP…PPPS. Asn467, Asn516, Asn580, Asn605, Asn696, Asn860, Asn952, Asn1000, Asn1213, and Asn1308 each carry an N-linked (GlcNAc...) asparagine glycan.

This sequence belongs to the stereocilin family. As to expression, strongly expressed in the inner ear, detected in the testis, and barely detected in the eye. Detected in the six sensory areas of the inner ear by immunofluorescence. Expressed only in the sensory hair cells and associated with the stereocilia, the stiff microvilli forming the structure for mechanoreception of sound stimulation.

The protein localises to the cell surface. It localises to the cell projection. The protein resides in the kinocilium. It is found in the stereocilium. Essential to the formation of horizontal top connectors between outer hair cell stereocilia. The chain is Stereocilin (Strc) from Mus musculus (Mouse).